We begin with the raw amino-acid sequence, 438 residues long: Actin-like protein 7A (438 aa).

A required for interaction with TES region spans residues 36–56 (ASLKDGPAKRAVWVRRDHSEP).

Belongs to the actin family. Interacts (via N-terminus) with TES (via LIM domain 2). Heterodimer with TES; the heterodimer interacts with ENAH to form a heterotrimer. Interacts with ACTL9. Interacts with CYLC1; the interaction may be relevant for proper acrosome attachment to the nuclear envelope.

The protein localises to the cytoplasm. The protein resides in the cytoskeleton. It localises to the golgi apparatus. Its subcellular location is the nucleus. Essential for normal spermatogenesis and male fertility. Required for normal sperm head morphology, acroplaxome formation, acrosome attachment, and acrosome granule stability. May anchor and stabilize acrosomal adherence to the acroplaxome at least in part by facilitating the presence of F-actin in the subacrosomal space. May play an important role in formation and fusion of Golgi-derived vesicles during acrosome biogenesis. The protein is Actin-like protein 7A (ACTL7A) of Bos taurus (Bovine).